The sequence spans 221 residues: N-acetyltransferase 8F1 (221 aa).

Residues 53 to 73 traverse the membrane as a helical segment; the sequence is LVLVSGSWLLAVVCIFFLLLL. Residues 69–219 form the N-acetyltransferase domain; that stretch reads FLLLLLRFLA…RTIQLKYPFP (151 aa).

This sequence belongs to the camello family.

It localises to the membrane. May play a role in regulation of gastrulation. This is N-acetyltransferase 8F1 from Rattus norvegicus (Rat).